Reading from the N-terminus, the 494-residue chain is DnaJ homolog subfamily C member 7 (494 aa).

N-acetylalanine is present on A2. 8 TPR repeats span residues 28-61 (AESF…CPNN), 62-95 (ASYY…DDSF), 96-129 (VRGH…DHKN), 142-175 (VMEY…APAC), 210-243 (ADAL…APDH), 256-289 (LKAK…DPNN), 294-327 (AKLY…DDTY), and 328-361 (IKAY…EKTK). The 71-residue stretch at 381 to 451 (DYYKILGVDK…KKKTRYDSGQ (71 aa)) folds into the J domain. S393 is subject to Phosphoserine.

As to quaternary structure, associates with complexes containing chaperones HSP70 and HSP90. Interacts with the GAP domain of NF1. Interacts with HSP90AA1. Interacts with HSPA1A/B; the interaction is enhanced by ATP. Interacts with HSP90AB1. Interacts with PGR. Interacts with RAD9A; the interaction is interrupted by UV and heat shock treatments. Interacts with HUS1 and RAD1. Interacts with NR1I3; this complex may also include HSP90 Interacts with HSPA8. In terms of tissue distribution, widely expressed with high levels in liver, skeletal muscle, kidney and testis.

The protein resides in the cytoplasm. The protein localises to the nucleus. Its subcellular location is the cytoskeleton. Its function is as follows. Acts as a co-chaperone regulating the molecular chaperones HSP70 and HSP90 in folding of steroid receptors, such as the glucocorticoid receptor and the progesterone receptor. Proposed to act as a recycling chaperone by facilitating the return of chaperone substrates to early stages of chaperoning if further folding is required. In vitro, induces ATP-independent dissociation of HSP90 but not of HSP70 from the chaperone-substrate complexes. Recruits NR1I3 to the cytoplasm. The chain is DnaJ homolog subfamily C member 7 (Dnajc7) from Mus musculus (Mouse).